The sequence spans 299 residues: Large ribosomal subunit protein uL18 (299 aa).

The protein belongs to the universal ribosomal protein uL18 family. In terms of assembly, component of the large ribosomal subunit (LSU). Interacts with Fmr1 to form the RNA-induced silencing complex (RISC), a ribonucleoprotein (RNP) complex involved in translation regulation, other components of the complex are Rm62, RpL11, AGO2 and Dcr-1.

The protein resides in the cytoplasm. The protein localises to the nucleus. In terms of biological role, component of the ribosome, a large ribonucleoprotein complex responsible for the synthesis of proteins in the cell. The small ribosomal subunit (SSU) binds messenger RNAs (mRNAs) and translates the encoded message by selecting cognate aminoacyl-transfer RNA (tRNA) molecules. The large subunit (LSU) contains the ribosomal catalytic site termed the peptidyl transferase center (PTC), which catalyzes the formation of peptide bonds, thereby polymerizing the amino acids delivered by tRNAs into a polypeptide chain. The nascent polypeptides leave the ribosome through a tunnel in the LSU and interact with protein factors that function in enzymatic processing, targeting, and the membrane insertion of nascent chains at the exit of the ribosomal tunnel. The polypeptide is Large ribosomal subunit protein uL18 (RpL5) (Drosophila melanogaster (Fruit fly)).